Reading from the N-terminus, the 399-residue chain is Nitric oxide reductase (399 aa).

The zinc metallo-hydrolase stretch occupies residues 32–221 (HRGTTYNAYL…DEIQKINLAI (190 aa)). H81, E83, D85, H148, D167, and H228 together coordinate Fe cation. The region spanning 255 to 394 (AVIAYDTMWL…RCYELGRKIA (140 aa)) is the Flavodoxin-like domain.

This sequence in the N-terminal section; belongs to the zinc metallo-hydrolase group 3 family. As to quaternary structure, homodimer. Requires FMN as cofactor. Fe cation serves as cofactor.

Its function is as follows. Has nitric oxide reductase activity in combination with Hrb; probably involved in nitrosative stress protection. This is Nitric oxide reductase (fprA) from Moorella thermoacetica (strain ATCC 39073 / JCM 9320).